A 378-amino-acid chain; its full sequence is Carbamoyl phosphate synthase small chain (378 aa).

The segment at 1-189 (MTKPAILALA…DSHPEIAASE (189 aa)) is CPSase. Positions 47, 241, and 243 each coordinate L-glutamine. One can recognise a Glutamine amidotransferase type-1 domain in the interval 193–378 (HVVAYDYGVK…RFIDAMAKRR (186 aa)). Cysteine 269 serves as the catalytic Nucleophile. Positions 270, 273, 311, 313, and 314 each coordinate L-glutamine. Residues histidine 353 and glutamate 355 contribute to the active site.

This sequence belongs to the CarA family. As to quaternary structure, composed of two chains; the small (or glutamine) chain promotes the hydrolysis of glutamine to ammonia, which is used by the large (or ammonia) chain to synthesize carbamoyl phosphate. Tetramer of heterodimers (alpha,beta)4.

It carries out the reaction hydrogencarbonate + L-glutamine + 2 ATP + H2O = carbamoyl phosphate + L-glutamate + 2 ADP + phosphate + 2 H(+). The enzyme catalyses L-glutamine + H2O = L-glutamate + NH4(+). Its pathway is amino-acid biosynthesis; L-arginine biosynthesis; carbamoyl phosphate from bicarbonate: step 1/1. It functions in the pathway pyrimidine metabolism; UMP biosynthesis via de novo pathway; (S)-dihydroorotate from bicarbonate: step 1/3. Functionally, small subunit of the glutamine-dependent carbamoyl phosphate synthetase (CPSase). CPSase catalyzes the formation of carbamoyl phosphate from the ammonia moiety of glutamine, carbonate, and phosphate donated by ATP, constituting the first step of 2 biosynthetic pathways, one leading to arginine and/or urea and the other to pyrimidine nucleotides. The small subunit (glutamine amidotransferase) binds and cleaves glutamine to supply the large subunit with the substrate ammonia. This chain is Carbamoyl phosphate synthase small chain, found in Pseudomonas syringae pv. tomato (strain ATCC BAA-871 / DC3000).